The following is a 357-amino-acid chain: Large ribosomal subunit protein uL10 (357 aa).

Residues 311-357 (MVSRSAEAAERKEKEEEEEEEAEEEEAEEEEEEEEEEAAAGLGALFG) are disordered. Residues 325–348 (EEEEEEEAEEEEAEEEEEEEEEEA) are compositionally biased toward acidic residues.

Belongs to the universal ribosomal protein uL10 family. Part of the 50S ribosomal subunit. Forms part of the ribosomal stalk which helps the ribosome interact with GTP-bound translation factors. Forms a heptameric L10(L12)2(L12)2(L12)2 complex, where L10 forms an elongated spine to which the L12 dimers bind in a sequential fashion.

Functionally, forms part of the ribosomal stalk, playing a central role in the interaction of the ribosome with GTP-bound translation factors. The polypeptide is Large ribosomal subunit protein uL10 (Methanopyrus kandleri (strain AV19 / DSM 6324 / JCM 9639 / NBRC 100938)).